A 295-amino-acid polypeptide reads, in one-letter code: Nitrogenase iron protein 1 (295 aa).

Residue 12 to 19 coordinates ATP; the sequence is GKGGIGKS. C100 lines the [4Fe-4S] cluster pocket. R103 carries the post-translational modification ADP-ribosylarginine; by dinitrogenase reductase ADP-ribosyltransferase. C134 contacts [4Fe-4S] cluster.

The protein belongs to the NifH/BchL/ChlL family. As to quaternary structure, homodimer. Requires [4Fe-4S] cluster as cofactor. In terms of processing, the reversible ADP-ribosylation of Arg-103 inactivates the nitrogenase reductase and regulates nitrogenase activity.

The enzyme catalyses N2 + 8 reduced [2Fe-2S]-[ferredoxin] + 16 ATP + 16 H2O = H2 + 8 oxidized [2Fe-2S]-[ferredoxin] + 2 NH4(+) + 16 ADP + 16 phosphate + 6 H(+). In terms of biological role, the key enzymatic reactions in nitrogen fixation are catalyzed by the nitrogenase complex, which has 2 components: the iron protein and the molybdenum-iron protein. The chain is Nitrogenase iron protein 1 (nifH1) from Mastigocladus laminosus (Fischerella sp.).